The primary structure comprises 485 residues: MAKNYAALARSVIAALGGVDNISAVTHCMTRLRFVIKDDALIDSPTLKTIPGVLGVVRSDNQCQVIIGNTVSQAFQEVVSLLPGDMQPAQPVGKPKLTLRRIGAGILDALIGTMSPLIPAIIGGSMVKLLAMILEMSGVLTKGSPTLTILNVIGDGAFFFLPLMVAASAAIKFKTNMSLAIAIAGVLVHPSFIELMAKAAQGEHVEFALIPVTAVKYTYTVIPALVMTWCLSYIERWVDSITPAVTKNFLKPMLIVLIAAPLAILLIGPIGIWIGSAISALVYTIHGYLGWLSVAIMGALWPLLVMTGMHRVFTPTIIQTIAETGKEGMVMPSEIGANLSLGGSSLAVAWKTKNPELRQTALAAAASAIMAGISEPALYGVAIRLKRPLIASLISGFICGAVAGMAGLASHSMAAPGLFTSVQFFDPANPMSIVWVFAVMALAVVLSFILTLLLGFEDIPVEEAAAQARKYQSVQPTVAKEVSLN.

Positions 1 to 88 constitute a PTS EIIB type-1 domain; sequence MAKNYAALAR…VSLLPGDMQP (88 aa). The active-site Phosphocysteine intermediate; for EIIB activity is the Cys28. A run of 10 helical transmembrane segments spans residues 102 to 122, 147 to 167, 177 to 197, 207 to 227, 254 to 274, 285 to 305, 330 to 350, 363 to 383, 389 to 409, and 433 to 453; these read IGAG…PAII, LTIL…MVAA, MSLA…ELMA, FALI…ALVM, LIVL…GIWI, IHGY…PLLV, VMPS…AVAW, AAAA…GVAI, LIAS…AGLA, and IVWV…LTLL. Residues 108–470 enclose the PTS EIIC type-1 domain; sequence DALIGTMSPL…VEEAAAQARK (363 aa).

It localises to the cell inner membrane. Its function is as follows. The phosphoenolpyruvate-dependent sugar phosphotransferase system (sugar PTS), a major carbohydrate active -transport system, catalyzes the phosphorylation of incoming sugar substrates concomitantly with their translocation across the cell membrane. This system is involved in arbutin, cellobiose, and salicin transport. The sequence is that of PTS system arbutin-, cellobiose-, and salicin-specific EIIBC component (ascF) from Escherichia coli (strain K12).